Here is a 92-residue protein sequence, read N- to C-terminus: Large ribosomal subunit protein bL28 (92 aa).

Belongs to the bacterial ribosomal protein bL28 family.

This is Large ribosomal subunit protein bL28 from Borrelia garinii subsp. bavariensis (strain ATCC BAA-2496 / DSM 23469 / PBi) (Borreliella bavariensis).